We begin with the raw amino-acid sequence, 72 residues long: ATP synthase subunit c (72 aa).

Helical transmembrane passes span Met-1–Ile-21 and Phe-49–Val-69.

Belongs to the ATPase C chain family. F-type ATPases have 2 components, F(1) - the catalytic core - and F(0) - the membrane proton channel. F(1) has five subunits: alpha(3), beta(3), gamma(1), delta(1), epsilon(1). F(0) has three main subunits: a(1), b(2) and c(10-14). The alpha and beta chains form an alternating ring which encloses part of the gamma chain. F(1) is attached to F(0) by a central stalk formed by the gamma and epsilon chains, while a peripheral stalk is formed by the delta and b chains.

The protein resides in the cell membrane. In terms of biological role, f(1)F(0) ATP synthase produces ATP from ADP in the presence of a proton or sodium gradient. F-type ATPases consist of two structural domains, F(1) containing the extramembraneous catalytic core and F(0) containing the membrane proton channel, linked together by a central stalk and a peripheral stalk. During catalysis, ATP synthesis in the catalytic domain of F(1) is coupled via a rotary mechanism of the central stalk subunits to proton translocation. Key component of the F(0) channel; it plays a direct role in translocation across the membrane. A homomeric c-ring of between 10-14 subunits forms the central stalk rotor element with the F(1) delta and epsilon subunits. In Bacillus anthracis (strain A0248), this protein is ATP synthase subunit c.